The primary structure comprises 152 residues: UPF0266 membrane protein YobD (152 aa).

The next 3 membrane-spanning stretches (helical) occupy residues 6–26, 45–65, and 67–87; these read LVLI…QFIM, VDSV…VTSH, and AQMT…IFWI.

It belongs to the UPF0266 family.

The protein localises to the cell inner membrane. The chain is UPF0266 membrane protein YobD from Salmonella dublin (strain CT_02021853).